Here is an 83-residue protein sequence, read N- to C-terminus: SPbeta prophage-derived uncharacterized protein YopE (83 aa).

2 helical membrane passes run 5-25 (AYFL…FIFV) and 60-80 (VIAF…TKLF).

The protein localises to the cell membrane. The protein is SPbeta prophage-derived uncharacterized protein YopE (yopE) of Bacillus subtilis (strain 168).